A 304-amino-acid chain; its full sequence is MMKQRTIAAPVKTVGIGLHSGRKVTIVIKPAPINSGVQFVRIDTPEQSVVPATALAVCDTRLASVIQKDGVRVSTVEHLLSACAGLGLDNLLIELDGEEVPIMDGSAASFLFLIESAGIAEQEAPRQFVVIKKAVEVREGDKLARLEPFFGFKLDFTIDFKHPAVDKTGQRFIVDFAEHAYRSEIGRARTFGFAHEVEALREMGLARGGSLDNAIVLDEHRILNNEELRYEDEFVRHKILDAIGDLYLIGHPIVGAYIAEKSGHALNNALLRKLLDDPSTYEISSFAENKAPAAYSQENQPLFF.

Zn(2+)-binding residues include His-78, His-237, and Asp-241. His-264 serves as the catalytic Proton donor.

Belongs to the LpxC family. Requires Zn(2+) as cofactor.

It carries out the reaction a UDP-3-O-[(3R)-3-hydroxyacyl]-N-acetyl-alpha-D-glucosamine + H2O = a UDP-3-O-[(3R)-3-hydroxyacyl]-alpha-D-glucosamine + acetate. It functions in the pathway glycolipid biosynthesis; lipid IV(A) biosynthesis; lipid IV(A) from (3R)-3-hydroxytetradecanoyl-[acyl-carrier-protein] and UDP-N-acetyl-alpha-D-glucosamine: step 2/6. Catalyzes the hydrolysis of UDP-3-O-myristoyl-N-acetylglucosamine to form UDP-3-O-myristoylglucosamine and acetate, the committed step in lipid A biosynthesis. This is UDP-3-O-acyl-N-acetylglucosamine deacetylase from Polynucleobacter asymbioticus (strain DSM 18221 / CIP 109841 / QLW-P1DMWA-1) (Polynucleobacter necessarius subsp. asymbioticus).